Reading from the N-terminus, the 233-residue chain is Probable GTP-binding protein EngB (233 aa).

The region spanning Gly-21–Asp-228 is the EngB-type G domain. GTP is bound by residues Gly-29–Ser-36 and Gly-56–Ala-60. Ser-36 and Thr-58 together coordinate Mg(2+). The interval Pro-68–Thr-87 is disordered. Residues Pro-72–Gly-85 show a composition bias toward basic and acidic residues. Residues Asp-107–Gly-110, Thr-174–Asp-177, and Phe-207–Ala-209 each bind GTP.

The protein belongs to the TRAFAC class TrmE-Era-EngA-EngB-Septin-like GTPase superfamily. EngB GTPase family. Requires Mg(2+) as cofactor.

Necessary for normal cell division and for the maintenance of normal septation. The polypeptide is Probable GTP-binding protein EngB (Symbiobacterium thermophilum (strain DSM 24528 / JCM 14929 / IAM 14863 / T)).